Here is a 314-residue protein sequence, read N- to C-terminus: MSRPRRRGRDINGVLLLDKPQGMSSNDALQKVKRIYNANRAGHTGALDPLATGMLPICLGEATKFSQYLLDSDKLYRVIARLGQRTDTSDADGQIVEERPVTFSAEQLAAALDTFRGDIEQIPSMYSALKYQGKKLYEYARQGIEVPREARPITVYELLFIRHEGNELELEIHCSKGTYIRTIIDDLGEKLGCGAHVIYLRRLAVSKYPVERMVTLEHLRELVEQAEQQDIPAAELLDPLLMPMDSPASDYPVVNLPLTSSVYFKNGNPVRTSGAPLEGLVRVTEGENGKFIGMGEIDDEGRVAPRRLVVEYPA.

Residue H43 participates in substrate binding. The active-site Nucleophile is the D48. Substrate contacts are provided by Y76, Y179, and L200.

This sequence belongs to the pseudouridine synthase TruB family. Type 1 subfamily.

It catalyses the reaction uridine(55) in tRNA = pseudouridine(55) in tRNA. Responsible for synthesis of pseudouridine from uracil-55 in the psi GC loop of transfer RNAs. This Shigella dysenteriae serotype 1 (strain Sd197) protein is tRNA pseudouridine synthase B.